The chain runs to 806 residues: DNA topoisomerase 1 (806 aa).

Positions Met1–Ser15 are enriched in low complexity. The disordered stretch occupies residues Met1–Lys236. Over residues Asp24 to Pro34 the composition is skewed to basic and acidic residues. Composition is skewed to basic residues over residues Arg49–Lys60 and Glu98–Lys108. The span at Ser113–Glu127 shows a compositional bias: acidic residues. The span at Glu128 to Asp137 shows a compositional bias: basic and acidic residues. A compositionally biased stretch (acidic residues) spans Asp138–Glu153. Over residues Glu159–Lys176 the composition is skewed to basic residues. A compositionally biased stretch (basic and acidic residues) spans Lys177–Glu188. Residues Glu189–Asp199 are compositionally biased toward acidic residues. A compositionally biased stretch (basic and acidic residues) spans Lys210–Glu229. Interaction with DNA regions lie at residues Lys467–Tyr468, Arg530–Lys535, and Thr634–Lys636. In terms of domain architecture, Topo IB-type catalytic spans Ser474 to Glu803. Tyr761 serves as the catalytic O-(3'-phospho-DNA)-tyrosine intermediate.

It belongs to the type IB topoisomerase family. Expressed in male germ cells and in mature sperm.

It localises to the nucleus. The protein localises to the nucleolus. The protein resides in the chromosome. It catalyses the reaction ATP-independent breakage of single-stranded DNA, followed by passage and rejoining.. Releases the supercoiling and torsional tension of DNA introduced during the DNA replication and transcription by transiently cleaving and rejoining one strand of the DNA duplex. Introduces a single-strand break via transesterification at a target site in duplex DNA. The scissile phosphodiester is attacked by the catalytic tyrosine of the enzyme, resulting in the formation of a DNA-(3'-phosphotyrosyl)-enzyme intermediate and the expulsion of a 5'-OH DNA strand. The free DNA strand then rotates around the intact phosphodiester bond on the opposing strand, thus removing DNA supercoils. Finally, in the religation step, the DNA 5'-OH attacks the covalent intermediate to expel the active-site tyrosine and restore the DNA phosphodiester backbone. Required for normal spermatogenesis and oogenesis. This Caenorhabditis elegans protein is DNA topoisomerase 1 (top-1).